The chain runs to 1807 residues: Phospholipase D (1807 aa).

Residues 1-28 are disordered; it reads MPGPDDDVREPTAAARTNNSGYGLRAAP. 3 helical membrane-spanning segments follow: residues 257 to 277, 305 to 325, and 587 to 607; these read IAFV…IVTS, AGVF…VFVY, and VYYI…GFLA. Positions 697–734 are disordered; the sequence is TASRMGTGNLAPASSRVDSSTQSEDSFEAPKPPPSSVS. PLD phosphodiesterase domains follow at residues 853–880 and 1249–1276; these read GFWS…CFGR and EQIY…NDRS. Active-site residues include histidine 858, lysine 860, aspartate 865, histidine 1254, lysine 1256, and aspartate 1261. Composition is skewed to polar residues over residues 1531 to 1547, 1568 to 1578, and 1597 to 1614; these read FSRS…SQLD, YNSNSMPSNAS, and YPNS…QSPA. The interval 1531 to 1621 is disordered; the sequence is FSRSNSVSTP…SPAIATGARS (91 aa).

The protein belongs to the phospholipase D family. TM-PLD subfamily.

Its subcellular location is the membrane. It carries out the reaction a 1,2-diacyl-sn-glycero-3-phosphocholine + H2O = a 1,2-diacyl-sn-glycero-3-phosphate + choline + H(+). Its function is as follows. Hydrolyzes glycerol-phospholipids at the terminal phosphodiesteric bond. The chain is Phospholipase D from Phytophthora infestans (Potato late blight agent).